A 305-amino-acid chain; its full sequence is tRNA dimethylallyltransferase (305 aa).

9 to 16 (GPTGAGKT) contributes to the ATP binding site. Residue 11–16 (TGAGKT) coordinates substrate. 2 interaction with substrate tRNA regions span residues 34–37 (DSRQ) and 158–162 (QRIVR).

It belongs to the IPP transferase family. In terms of assembly, monomer. Mg(2+) is required as a cofactor.

The enzyme catalyses adenosine(37) in tRNA + dimethylallyl diphosphate = N(6)-dimethylallyladenosine(37) in tRNA + diphosphate. Catalyzes the transfer of a dimethylallyl group onto the adenine at position 37 in tRNAs that read codons beginning with uridine, leading to the formation of N6-(dimethylallyl)adenosine (i(6)A). This chain is tRNA dimethylallyltransferase, found in Oleidesulfovibrio alaskensis (strain ATCC BAA-1058 / DSM 17464 / G20) (Desulfovibrio alaskensis).